A 505-amino-acid polypeptide reads, in one-letter code: MAYAPQLRLYNTLTRMKEEFSPLDADNVRMYVCGPTVYDFAHIGNARPVIVFDVLFRLLRHVYGAEHVTYARNITDVDDKINARAARDYPDLAFNEAIRRVTESTNAQFQADVTALGNLQPSVQPRATEHMDEMRAMIDRLVKLGVAYVAEDHVLFSPSAMNERKGPRYGALARRSLDEMLAGARVDVASYKRDEMDFVLWKPSKEGEPGWSSPAGIAVLGRPGWHIECSAMSMAKLLEPFGGGLKCDDPLKNQFDIHGGGIDLVFPHHENEIAQSCCAFGTERMANIWMHNGFLQVEGQKMSKSLGNFITIRDVLNEGLPQLGVWDDVDARDRWIGLAARLSMLQTHYREPINWTAQRLAESADELHRWYGLLRDRKFTVPETLTAVGEVVEALSDDLNSWTAITALRKAFKARDITGLGEGMALLGLLDPHFVMAEDIPVFAKAEVDHQAIEARIAERLRFINEKNWAEADRIRDELLQEGVQLKDGKDPATGERTTSWDVVG.

Cys33 contributes to the Zn(2+) binding site. A 'HIGH' region motif is present at residues 35–45 (PTVYDFAHIGN). Zn(2+) is bound by residues Cys229, His268, and Glu272. The 'KMSKS' region motif lies at 301–305 (KMSKS). An ATP-binding site is contributed by Lys304.

It belongs to the class-I aminoacyl-tRNA synthetase family. As to quaternary structure, monomer. Requires Zn(2+) as cofactor.

It localises to the cytoplasm. It catalyses the reaction tRNA(Cys) + L-cysteine + ATP = L-cysteinyl-tRNA(Cys) + AMP + diphosphate. This Brucella anthropi (strain ATCC 49188 / DSM 6882 / CCUG 24695 / JCM 21032 / LMG 3331 / NBRC 15819 / NCTC 12168 / Alc 37) (Ochrobactrum anthropi) protein is Cysteine--tRNA ligase.